Consider the following 119-residue polypeptide: Acidic phospholipase A2 natratoxin (119 aa).

7 disulfide bridges follow: Cys11-Cys71, Cys26-Cys118, Cys28-Cys44, Cys43-Cys99, Cys50-Cys92, Cys60-Cys85, and Cys78-Cys90. Positions 27, 29, and 31 each coordinate Ca(2+). The active site involves His47. Asp48 contacts Ca(2+). Asp93 is a catalytic residue.

Belongs to the phospholipase A2 family. Group I subfamily. D49 sub-subfamily. It depends on Ca(2+) as a cofactor. Expressed by the venom gland.

It is found in the secreted. The enzyme catalyses a 1,2-diacyl-sn-glycero-3-phosphocholine + H2O = a 1-acyl-sn-glycero-3-phosphocholine + a fatty acid + H(+). Its function is as follows. Snake venom phospholipase A2 (PLA2) that has an effectively inhibitory effect on A-type K(+) currents (Kv/KCN) in acutely dissociated rat dorsal root ganglion (DRG) neurons. This inhibitory effect is independent of its enzymatic activity. PLA2 catalyzes the calcium-dependent hydrolysis of the 2-acyl groups in 3-sn-phosphoglycerides. The sequence is that of Acidic phospholipase A2 natratoxin from Naja atra (Chinese cobra).